We begin with the raw amino-acid sequence, 329 residues long: GTPase Obg (329 aa).

In terms of domain architecture, Obg spans 1-159 (MQFIDQARIT…WPLQLELKLL (159 aa)). An OBG-type G domain is found at 160-328 (AEVGIIGLPN…LLAETWVELG (169 aa)). Residues 166–173 (GLPNAGKS), 191–195 (FTTLV), 213–216 (DIPG), 280–283 (NKQE), and 309–311 (SAA) each bind ATP. Ser173 and Thr193 together coordinate Mg(2+).

It belongs to the TRAFAC class OBG-HflX-like GTPase superfamily. OBG GTPase family. In terms of assembly, monomer. The cofactor is Mg(2+).

Its subcellular location is the cytoplasm. An essential GTPase which binds GTP, GDP and possibly (p)ppGpp with moderate affinity, with high nucleotide exchange rates and a fairly low GTP hydrolysis rate. Plays a role in control of the cell cycle, stress response, ribosome biogenesis and in those bacteria that undergo differentiation, in morphogenesis control. This is GTPase Obg from Synechococcus sp. (strain CC9605).